A 554-amino-acid chain; its full sequence is Dihydroxy-acid dehydratase (554 aa).

Aspartate 78 lines the Mg(2+) pocket. Cysteine 119 serves as a coordination point for [2Fe-2S] cluster. Residues aspartate 120 and lysine 121 each contribute to the Mg(2+) site. The residue at position 121 (lysine 121) is an N6-carboxylysine. Residue cysteine 191 coordinates [2Fe-2S] cluster. A Mg(2+)-binding site is contributed by glutamate 442. Catalysis depends on serine 468, which acts as the Proton acceptor.

Belongs to the IlvD/Edd family. As to quaternary structure, homodimer. [2Fe-2S] cluster is required as a cofactor. The cofactor is Mg(2+).

It carries out the reaction (2R)-2,3-dihydroxy-3-methylbutanoate = 3-methyl-2-oxobutanoate + H2O. It catalyses the reaction (2R,3R)-2,3-dihydroxy-3-methylpentanoate = (S)-3-methyl-2-oxopentanoate + H2O. It participates in amino-acid biosynthesis; L-isoleucine biosynthesis; L-isoleucine from 2-oxobutanoate: step 3/4. Its pathway is amino-acid biosynthesis; L-valine biosynthesis; L-valine from pyruvate: step 3/4. Its function is as follows. Functions in the biosynthesis of branched-chain amino acids. Catalyzes the dehydration of (2R,3R)-2,3-dihydroxy-3-methylpentanoate (2,3-dihydroxy-3-methylvalerate) into 2-oxo-3-methylpentanoate (2-oxo-3-methylvalerate) and of (2R)-2,3-dihydroxy-3-methylbutanoate (2,3-dihydroxyisovalerate) into 2-oxo-3-methylbutanoate (2-oxoisovalerate), the penultimate precursor to L-isoleucine and L-valine, respectively. The protein is Dihydroxy-acid dehydratase of Thermotoga petrophila (strain ATCC BAA-488 / DSM 13995 / JCM 10881 / RKU-1).